We begin with the raw amino-acid sequence, 138 residues long: MQPDRNLLADLDHIFVDRSLGAVQVPQLLRDAGFRLTTMREHYGETQAQSVSDHKWIAMTAECGWIGFHKDANIRRNAVERRTVLDTGARLFCVPRADILAEQVAARYIASLAAIARAARFPGPFIYTVHPSKIVRVL.

Functionally, toxic component of a type II toxin-antitoxin (TA) system. An RNase. The cognate antitoxin is VapB45. This Mycobacterium tuberculosis (strain ATCC 25618 / H37Rv) protein is Putative ribonuclease VapC45.